The following is a 178-amino-acid chain: FXYD domain-containing ion transport regulator 5 (178 aa).

The N-terminal stretch at 1–21 is a signal peptide; the sequence is MSPSGRLCLLTIVGLILPTRG. The Extracellular segment spans residues 22 to 145; sequence QTLKDTTSSS…FYDEHTLRKR (124 aa). Residues 23-131 form a disordered region; that stretch reads TLKDTTSSSS…QTLKPSGFHE (109 aa). Composition is skewed to low complexity over residues 26–36 and 68–77; these read DTTSSSSADST and TPQPQTQTQQ. Positions 103 to 125 are enriched in polar residues; the sequence is DTTTLSERPSPSTDVQTDPQTLK. The chain crosses the membrane as a helical span at residues 146–164; sequence GLLVAAVLFITGIIILTSG. Residues 165-178 lie on the Cytoplasmic side of the membrane; the sequence is KCRQLSRLCRNRCR.

This sequence belongs to the FXYD family. Regulatory subunit of the sodium/potassium-transporting ATPase which is composed of a catalytic alpha subunit, a non-catalytic beta subunit and an additional regulatory subunit. The regulatory subunit, a member of the FXYD protein family, modulates the enzymatic activity in a tissue- and isoform-specific way by changing affinities of the Na+/K+-ATPase toward Na(+), K(+) or ATP. In terms of processing, glycosylated.

It localises to the cell membrane. The protein localises to the basolateral cell membrane. Functionally, associates with and regulates the activity of the sodium/potassium-transporting ATPase (NKA) which catalyzes the hydrolysis of ATP coupled with the exchange of Na(+) and K(+) ions across the plasma membrane. May increase NKA activity by increasing the apparent affinity for Na(+). Involved in down-regulation of E-cadherin which results in reduced cell adhesion. Promotes metastasis. In Homo sapiens (Human), this protein is FXYD domain-containing ion transport regulator 5 (FXYD5).